The primary structure comprises 117 residues: Large ribosomal subunit protein uL18 (117 aa).

Belongs to the universal ribosomal protein uL18 family. Part of the 50S ribosomal subunit; part of the 5S rRNA/L5/L18/L25 subcomplex. Contacts the 5S and 23S rRNAs.

This is one of the proteins that bind and probably mediate the attachment of the 5S RNA into the large ribosomal subunit, where it forms part of the central protuberance. This chain is Large ribosomal subunit protein uL18, found in Glaesserella parasuis serovar 5 (strain SH0165) (Haemophilus parasuis).